A 287-amino-acid polypeptide reads, in one-letter code: Ribosomal RNA small subunit methyltransferase A (287 aa).

S-adenosyl-L-methionine is bound by residues N28, L30, G55, E77, D103, and N123.

It belongs to the class I-like SAM-binding methyltransferase superfamily. rRNA adenine N(6)-methyltransferase family. RsmA subfamily.

It is found in the cytoplasm. It catalyses the reaction adenosine(1518)/adenosine(1519) in 16S rRNA + 4 S-adenosyl-L-methionine = N(6)-dimethyladenosine(1518)/N(6)-dimethyladenosine(1519) in 16S rRNA + 4 S-adenosyl-L-homocysteine + 4 H(+). Functionally, specifically dimethylates two adjacent adenosines (A1518 and A1519) in the loop of a conserved hairpin near the 3'-end of 16S rRNA in the 30S particle. May play a critical role in biogenesis of 30S subunits. The sequence is that of Ribosomal RNA small subunit methyltransferase A from Rhodopseudomonas palustris (strain HaA2).